The following is a 240-amino-acid chain: UDP-2,3-diacylglucosamine hydrolase (240 aa).

5 residues coordinate Mn(2+): aspartate 9, histidine 11, aspartate 43, asparagine 81, and histidine 116. 81–82 (NR) lines the substrate pocket. Positions 124, 162, 166, 169, and 197 each coordinate substrate. Mn(2+)-binding residues include histidine 197 and histidine 199.

It belongs to the LpxH family. Requires Mn(2+) as cofactor.

Its subcellular location is the cell inner membrane. The enzyme catalyses UDP-2-N,3-O-bis[(3R)-3-hydroxytetradecanoyl]-alpha-D-glucosamine + H2O = 2-N,3-O-bis[(3R)-3-hydroxytetradecanoyl]-alpha-D-glucosaminyl 1-phosphate + UMP + 2 H(+). The protein operates within glycolipid biosynthesis; lipid IV(A) biosynthesis; lipid IV(A) from (3R)-3-hydroxytetradecanoyl-[acyl-carrier-protein] and UDP-N-acetyl-alpha-D-glucosamine: step 4/6. In terms of biological role, hydrolyzes the pyrophosphate bond of UDP-2,3-diacylglucosamine to yield 2,3-diacylglucosamine 1-phosphate (lipid X) and UMP by catalyzing the attack of water at the alpha-P atom. Involved in the biosynthesis of lipid A, a phosphorylated glycolipid that anchors the lipopolysaccharide to the outer membrane of the cell. The polypeptide is UDP-2,3-diacylglucosamine hydrolase (Neisseria meningitidis serogroup C / serotype 2a (strain ATCC 700532 / DSM 15464 / FAM18)).